A 73-amino-acid chain; its full sequence is MAKEDHIEMAGTVIDTLPNTMFRVELENGHIVTAHISGRMRKNYIRILTGDKVKVELTPYDLSKGRIIFRDKG.

Residues 1 to 72 (MAKEDHIEMA…SKGRIIFRDK (72 aa)) enclose the S1-like domain.

This sequence belongs to the IF-1 family. As to quaternary structure, component of the 30S ribosomal translation pre-initiation complex which assembles on the 30S ribosome in the order IF-2 and IF-3, IF-1 and N-formylmethionyl-tRNA(fMet); mRNA recruitment can occur at any time during PIC assembly.

It is found in the cytoplasm. Functionally, one of the essential components for the initiation of protein synthesis. Stabilizes the binding of IF-2 and IF-3 on the 30S subunit to which N-formylmethionyl-tRNA(fMet) subsequently binds. Helps modulate mRNA selection, yielding the 30S pre-initiation complex (PIC). Upon addition of the 50S ribosomal subunit IF-1, IF-2 and IF-3 are released leaving the mature 70S translation initiation complex. The protein is Translation initiation factor IF-1 of Legionella pneumophila (strain Paris).